The following is a 1124-amino-acid chain: Regulator of nonsense transcripts 1 (1124 aa).

The interval 1–410 (MSVEAYGPSS…LRSSVGAPVE (410 aa)) is sufficient for interaction with RENT2. 2 positions are modified to phosphoserine: Ser10 and Ser31. The interval 39–69 (TLPSQTQTPPGGPGGAGGPGGAGAGGAAGQL) is disordered. The span at 51 to 66 (PGGAGGPGGAGAGGAA) shows a compositional bias: gly residues. Positions 110–267 (TKDLPVHACS…NKLEELWKEN (158 aa)) constitute a Upf1 CH-rich domain. Residues Cys118, Cys121, Cys132, Ser135, Cys140, His150, His154, Cys160, Cys178, Cys181, Cys204, and Cys208 each coordinate Zn(2+). Residues 118 to 150 (CSYCGIHDPACVVYCNTSKKWFCNGRGNTSGSH) are C3H. Positions 132–160 (CNTSKKWFCNGRGNTSGSHIVNHLVRAKC) are CC/SHH/C. The interval 178–208 (CYNCGCRNVFLLGFIPAKADSVVVLLCRQPC) is C4. ATP contacts are provided by residues Gln481 and 501-505 (GTGKT). Position 560 is a phosphoserine (Ser560). Positions 671, 708, and 839 each coordinate ATP. Ser951 carries the phosphoserine modification. Disordered regions lie at residues 1004-1053 (FGQA…VASQ) and 1066-1091 (SMSQPSQMSQPGLSQPELSQDSYLGD). Arg1014 bears the Omega-N-methylarginine mark. A compositionally biased stretch (basic residues) spans 1020-1029 (KTGRGGRQKN). Residues 1036 to 1053 (PSQTTLPNSQASQDVASQ) are compositionally biased toward polar residues. Residues 1066-1081 (SMSQPSQMSQPGLSQP) show a composition bias toward low complexity. Ser1084, Ser1102, Ser1105, and Ser1122 each carry phosphoserine. 2 short sequence motifs ([ST]-Q motif) span residues 1084–1085 (SQ) and 1102–1103 (SQ). The tract at residues 1105–1124 (STYQGERAYQHGGVTGLSQY) is disordered.

It belongs to the DNA2/NAM7 helicase family. Found in a post-splicing messenger ribonucleoprotein (mRNP) complex. Associates with the exon junction complex (EJC). Associates with the SGM1C complex; is phosphorylated by the complex kinase component SGM1. Part of a complex composed of SMG1, DHX34 and UPF1; within the complex DHX34 acts as a scaffolding protein to facilitate SMG1 phosphorylation of UPF1. Interacts with UPF2. Interacts with UPF3A and UPF3B. Interacts with EST1A. Interacts with SLBP. Interacts (when hyperphosphorylated) with PNRC2. Interacts with AGO1 and AGO2. Interacts with GSPT2. Interacts with isoform 1 and isoform 5 of ADAR/ADAR1. Interacts with SMG7. Interacts with ZC3H12A; this interaction occurs in a mRNA translationally active- and termination-dependent manner and is essential for ZC3H12A-mediated degradation of target mRNAs. Interacts with CPSF6. Interacts with MOV10; the interaction is direct and RNA-dependent. Interacts with SHFL; the interaction increases in the presence of RNA. Interacts with UPF2 and DDX4; interactions are mediated by TDRD6. Interacts with DHX34 and PABPC1/PABP1; the interactions are RNA-independent. Interacts with RBM46. In terms of processing, phosphorylated by SMG1; required for formation of mRNA surveillance complexes. As to expression, localizes in male germ cells.

It localises to the cytoplasm. It is found in the P-body. Its subcellular location is the nucleus. The protein resides in the perinuclear region. The enzyme catalyses ATP + H2O = ADP + phosphate + H(+). RNA-dependent helicase required for nonsense-mediated decay (NMD) of aberrant mRNAs containing premature stop codons and modulates the expression level of normal mRNAs. Is recruited to mRNAs upon translation termination and undergoes a cycle of phosphorylation and dephosphorylation; its phosphorylation appears to be a key step in NMD. Recruited by release factors to stalled ribosomes together with the SMG1C protein kinase complex to form the transient SURF (SMG1-UPF1-eRF1-eRF3) complex. In EJC-dependent NMD, the SURF complex associates with the exon junction complex (EJC) (located 50-55 or more nucleotides downstream from the termination codon) through UPF2 and allows the formation of an UPF1-UPF2-UPF3 surveillance complex which is believed to activate NMD. Phosphorylated UPF1 is recognized by EST1B/SMG5, SMG6 and SMG7 which are thought to provide a link to the mRNA degradation machinery involving exonucleolytic and endonucleolytic pathways, and to serve as adapters to protein phosphatase 2A (PP2A), thereby triggering UPF1 dephosphorylation and allowing the recycling of NMD factors. UPF1 can also activate NMD without UPF2 or UPF3, and in the absence of the NMD-enhancing downstream EJC indicative for alternative NMD pathways. Plays a role in replication-dependent histone mRNA degradation at the end of phase S; the function is independent of UPF2. For the recognition of premature termination codons (PTC) and initiation of NMD a competitive interaction between UPF1 and PABPC1 with the ribosome-bound release factors is proposed. The ATPase activity of UPF1 is required for disassembly of mRNPs undergoing NMD. Together with UPF2 and dependent on TDRD6, mediates the degradation of mRNA harboring long 3'UTR by inducing the NMD machinery. Also capable of unwinding double-stranded DNA and translocating on single-stranded DNA. The protein is Regulator of nonsense transcripts 1 of Mus musculus (Mouse).